We begin with the raw amino-acid sequence, 254 residues long: Phosphate import ATP-binding protein PstB 2 (254 aa).

Residues 9 to 249 (FNIDNLNLFY…PRDDRTRGYV (241 aa)) enclose the ABC transporter domain. 41–48 (GPSGCGKS) is an ATP binding site.

The protein belongs to the ABC transporter superfamily. Phosphate importer (TC 3.A.1.7) family. In terms of assembly, the complex is composed of two ATP-binding proteins (PstB), two transmembrane proteins (PstC and PstA) and a solute-binding protein (PstS).

It is found in the cell inner membrane. The enzyme catalyses phosphate(out) + ATP + H2O = ADP + 2 phosphate(in) + H(+). In terms of biological role, part of the ABC transporter complex PstSACB involved in phosphate import. Responsible for energy coupling to the transport system. In Photobacterium profundum (strain SS9), this protein is Phosphate import ATP-binding protein PstB 2.